We begin with the raw amino-acid sequence, 526 residues long: Bifunctional purine biosynthesis protein PurH (526 aa).

The 145-residue stretch at 1–145 (MIRTALLSVS…KNHQDVTVLI (145 aa)) folds into the MGS-like domain.

This sequence belongs to the PurH family.

It catalyses the reaction (6R)-10-formyltetrahydrofolate + 5-amino-1-(5-phospho-beta-D-ribosyl)imidazole-4-carboxamide = 5-formamido-1-(5-phospho-D-ribosyl)imidazole-4-carboxamide + (6S)-5,6,7,8-tetrahydrofolate. The catalysed reaction is IMP + H2O = 5-formamido-1-(5-phospho-D-ribosyl)imidazole-4-carboxamide. The protein operates within purine metabolism; IMP biosynthesis via de novo pathway; 5-formamido-1-(5-phospho-D-ribosyl)imidazole-4-carboxamide from 5-amino-1-(5-phospho-D-ribosyl)imidazole-4-carboxamide (10-formyl THF route): step 1/1. It participates in purine metabolism; IMP biosynthesis via de novo pathway; IMP from 5-formamido-1-(5-phospho-D-ribosyl)imidazole-4-carboxamide: step 1/1. This chain is Bifunctional purine biosynthesis protein PurH, found in Polynucleobacter asymbioticus (strain DSM 18221 / CIP 109841 / QLW-P1DMWA-1) (Polynucleobacter necessarius subsp. asymbioticus).